A 457-amino-acid polypeptide reads, in one-letter code: Siroheme synthase (457 aa).

The interval 1-204 (MDHLPIFCQL…ADEKAVNATT (204 aa)) is precorrin-2 dehydrogenase /sirohydrochlorin ferrochelatase. NAD(+) contacts are provided by residues 22 to 23 (DV) and 43 to 44 (LT). S128 is modified (phosphoserine). The interval 216-457 (GEVVLVGAGP…RDKLNWFSNH (242 aa)) is uroporphyrinogen-III C-methyltransferase. Position 225 (P225) interacts with S-adenosyl-L-methionine. The active-site Proton acceptor is D248. K270 (proton donor) is an active-site residue. Residues 301–303 (GGD), I306, 331–332 (TA), M382, and G411 each bind S-adenosyl-L-methionine.

This sequence in the N-terminal section; belongs to the precorrin-2 dehydrogenase / sirohydrochlorin ferrochelatase family. In the C-terminal section; belongs to the precorrin methyltransferase family.

The enzyme catalyses uroporphyrinogen III + 2 S-adenosyl-L-methionine = precorrin-2 + 2 S-adenosyl-L-homocysteine + H(+). It carries out the reaction precorrin-2 + NAD(+) = sirohydrochlorin + NADH + 2 H(+). The catalysed reaction is siroheme + 2 H(+) = sirohydrochlorin + Fe(2+). Its pathway is cofactor biosynthesis; adenosylcobalamin biosynthesis; precorrin-2 from uroporphyrinogen III: step 1/1. The protein operates within cofactor biosynthesis; adenosylcobalamin biosynthesis; sirohydrochlorin from precorrin-2: step 1/1. It functions in the pathway porphyrin-containing compound metabolism; siroheme biosynthesis; precorrin-2 from uroporphyrinogen III: step 1/1. It participates in porphyrin-containing compound metabolism; siroheme biosynthesis; siroheme from sirohydrochlorin: step 1/1. Its pathway is porphyrin-containing compound metabolism; siroheme biosynthesis; sirohydrochlorin from precorrin-2: step 1/1. In terms of biological role, multifunctional enzyme that catalyzes the SAM-dependent methylations of uroporphyrinogen III at position C-2 and C-7 to form precorrin-2 via precorrin-1. Then it catalyzes the NAD-dependent ring dehydrogenation of precorrin-2 to yield sirohydrochlorin. Finally, it catalyzes the ferrochelation of sirohydrochlorin to yield siroheme. The chain is Siroheme synthase from Salmonella schwarzengrund (strain CVM19633).